Consider the following 382-residue polypeptide: Chaperone protein DnaJ (382 aa).

Residues 5–70 (DYYDLLGLSK…DKRAAYDRYG (66 aa)) enclose the J domain. The CR-type zinc-finger motif lies at 138 to 216 (GTKVPINYVT…CSGSGRVRDE (79 aa)). Zn(2+) contacts are provided by Cys151, Cys154, Cys168, Cys171, Cys190, Cys193, Cys204, and Cys207. CXXCXGXG motif repeat units follow at residues 151 to 158 (CSSCSGSG), 168 to 175 (CNTCHGAG), 190 to 197 (CHVCNGEG), and 204 to 211 (CKKCSGSG).

Belongs to the DnaJ family. As to quaternary structure, homodimer. Zn(2+) is required as a cofactor.

It is found in the cytoplasm. Functionally, participates actively in the response to hyperosmotic and heat shock by preventing the aggregation of stress-denatured proteins and by disaggregating proteins, also in an autonomous, DnaK-independent fashion. Unfolded proteins bind initially to DnaJ; upon interaction with the DnaJ-bound protein, DnaK hydrolyzes its bound ATP, resulting in the formation of a stable complex. GrpE releases ADP from DnaK; ATP binding to DnaK triggers the release of the substrate protein, thus completing the reaction cycle. Several rounds of ATP-dependent interactions between DnaJ, DnaK and GrpE are required for fully efficient folding. Also involved, together with DnaK and GrpE, in the DNA replication of plasmids through activation of initiation proteins. This chain is Chaperone protein DnaJ, found in Ehrlichia ruminantium (strain Gardel).